The sequence spans 716 residues: Probable calcium-binding mitochondrial carrier K02F3.2 (716 aa).

The segment at 1–345 (MSFDHLLTSS…CLKDIQAIDP (345 aa)) is N-terminal domain. 4 consecutive EF-hand domains span residues 93 to 121 (YNKE…FCAF), 127 to 162 (SPDA…TQPL), 165 to 195 (QDFD…CQLL), and 198 to 233 (FYEE…VKGH). Residues aspartate 106, threonine 108, aspartate 110, glutamate 117, aspartate 140, asparagine 142, serine 144, threonine 146, and glutamate 151 each contribute to the Ca(2+) site. Residues aspartate 211, asparagine 213, asparagine 215, threonine 217, and aspartate 222 each contribute to the Ca(2+) site. The tract at residues 346-362 (ERLKRVSQMDRLINIKA) is linker loop domain. A carrier domain region spans residues 372-664 (GTAFLESAYR…RLFYVDFAGS (293 aa)). 3 Solcar repeats span residues 376–468 (LESA…MRDK), 475–560 (IPLY…AKLA), and 568–656 (NSPG…LQRL). The next 6 membrane-spanning stretches (helical) occupy residues 382–399 (FLLG…VYPI), 443–462 (GLLP…LTMN), 485–498 (GTGG…TNPL), 535–554 (GSRA…FPAY), 574–591 (FASA…VTPA), and 631–650 (GTAA…LLTY). The interval 665–716 (RPTGSELATTKTIQDESSTNPDHVGGYKLAAATFSGIEHKFGLFLPKFETSK) is C-terminal domain.

This sequence belongs to the mitochondrial carrier (TC 2.A.29) family. Homodimer (via N-terminus).

The protein resides in the mitochondrion inner membrane. In terms of biological role, mitochondrial and calcium-binding carrier that catalyzes the calcium-dependent exchange of cytoplasmic glutamate with mitochondrial aspartate across the mitochondrial inner membrane. In Caenorhabditis elegans, this protein is Probable calcium-binding mitochondrial carrier K02F3.2.